We begin with the raw amino-acid sequence, 513 residues long: MEISWGRALWRNFLGQSPDWYKLALIIFLIVNPLIFLISPFVAGWLLVAEFIFTLAMALKCYPLLPGGLLAIEAVFIGMTSAEHVREEVAANLEVLLLLMFMVAGIYFMKQLLLFIFTRLLLSIRSKMLLSLSFCVAAAFLSAFLDALTVVAVVISVAVGFYGIYHRVASSRTEDTDLQDDSHIDKHYKVVLEQFRGFLRSLMMHAGVGTALGGVMTMVGEPQNLIIAKAAGWHFGDFFLRMSPVTVPVLICGLLTCLLVEKLRWFGYGETLPEKVREVLQQFDDQSRNQRTRQDKIRLIVQAIIGVWLVTALALHLAEVGLIGLSVIILATSLTGVTDEHAIGKAFTESLPFTALLTVFFSVVAVIIDQQLFSPIIQFVLQASEHAQLSLFYIFNGLLSSISDNVFVGTIYINEAKAAMESGAITLKQYELLAVAINTGTNLPSVATPNGQAAFLFLLTSALAPLIRLSYGRMVWMALPYTLVLTLVGLLCVEFTLAPVTEWFMQMGWIATL.

12 helical membrane passes run 23 to 43, 52 to 72, 97 to 117, 120 to 140, 144 to 164, 202 to 222, 238 to 258, 303 to 323, 348 to 368, 391 to 411, 447 to 467, and 475 to 495; these read LALI…PFVA, IFTL…LLAI, LLLM…LFIF, LLLS…AAAF, FLDA…FYGI, LMMH…VGEP, FFLR…LTCL, AIIG…VGLI, TESL…AVII, LFYI…VGTI, ATPN…APLI, and VWMA…CVEF.

It belongs to the NhaB Na(+)/H(+) (TC 2.A.34) antiporter family.

The protein localises to the cell inner membrane. The catalysed reaction is 2 Na(+)(in) + 3 H(+)(out) = 2 Na(+)(out) + 3 H(+)(in). Functionally, na(+)/H(+) antiporter that extrudes sodium in exchange for external protons. This Escherichia coli O6:H1 (strain CFT073 / ATCC 700928 / UPEC) protein is Na(+)/H(+) antiporter NhaB.